A 714-amino-acid polypeptide reads, in one-letter code: VIN3-like protein 2 (714 aa).

The segment at 164 to 232 (RCSCCICRKY…CFYCVSCGKA (69 aa)) adopts a PHD-type zinc-finger fold. The short motif at 239–246 (WKKQLTIA) is the Nuclear localization signal element. The Fibronectin type-III domain occupies 366 to 463 (GSTKIRFEDV…INVLTRSAEE (98 aa)). Polar residues predominate over residues 478-498 (LTNCSTLSSNPSSVEAESNND). The tract at residues 478-530 (LTNCSTLSSNPSSVEAESNNDYIVPKKPSSKNEDNNSPSVDESAAKRMKRTTD) is disordered. The segment at 602-714 (SMKDNCNNGD…PSGFCMKLWH (113 aa)) is VIN3-Interacting Domain (VID).

As to quaternary structure, self-interacts. Interacts with VIN3 and VIL1. Component of the plant homeodomain / polycomb repressive complex 2 (PHD-PRC2) large complex during prolonged cold, composed of core PRC2 components (VRN2, EZA1, FIE and MSI1), and three related PHD finger proteins (VIL1, VIL2 and VIN3) that mediates histone H3 trimethylation on 'Lys-27' (H3K27me3).

It localises to the nucleus. Its function is as follows. Maybe involved in both the vernalization and photoperiod pathways by regulating gene expression. Binds preferentially to dimethylated histone H3 'Lys-9' (H3K9me2). Promotes flowering in non-inductive photoperiods (e.g. short days) through the maintenance of the epigenetically repressed state of MAF5 via H3K9me2 and plant homeodomain / polycomb repressive complex 2 (PHD-PRC2)-dependent H3K27me3. The sequence is that of VIN3-like protein 2 (VIL2) from Arabidopsis thaliana (Mouse-ear cress).